Here is a 194-residue protein sequence, read N- to C-terminus: UPF0301 protein BQ03640 (194 aa).

This sequence belongs to the UPF0301 (AlgH) family.

The chain is UPF0301 protein BQ03640 from Bartonella quintana (strain Toulouse) (Rochalimaea quintana).